Consider the following 340-residue polypeptide: Photosystem II protein D1 (340 aa).

3 helical membrane-spanning segments follow: residues 25-42, 114-129, and 138-152; these read YIGW…LATV, HFFL…EWEF, and WIFV…AAAA. His114 serves as a coordination point for chlorophyll a. A pheophytin a-binding site is contributed by Trp122. 2 residues coordinate [CaMn4O5] cluster: Asp166 and Glu185. Residues 193 to 214 form a helical membrane-spanning segment; sequence FHILGVAGVFGGSLFSAMHGSL. Position 194 (His194) interacts with chlorophyll a. A quinone is bound by residues His211 and 260–261; that span reads SF. His211 contributes to the Fe cation binding site. Residue His268 coordinates Fe cation. The helical transmembrane segment at 270–284 threads the bilayer; it reads FLAAWPVIGIWFTSL. [CaMn4O5] cluster is bound by residues His328, Glu329, Asp338, and Ala340.

It belongs to the reaction center PufL/M/PsbA/D family. PSII is composed of 1 copy each of membrane proteins PsbA, PsbB, PsbC, PsbD, PsbE, PsbF, PsbH, PsbI, PsbJ, PsbK, PsbL, PsbM, PsbT, PsbX, PsbY, PsbZ, Psb30/Ycf12, at least 3 peripheral proteins of the oxygen-evolving complex and a large number of cofactors. It forms dimeric complexes. It depends on The D1/D2 heterodimer binds P680, chlorophylls that are the primary electron donor of PSII, and subsequent electron acceptors. It shares a non-heme iron and each subunit binds pheophytin, quinone, additional chlorophylls, carotenoids and lipids. D1 provides most of the ligands for the Mn4-Ca-O5 cluster of the oxygen-evolving complex (OEC). There is also a Cl(-1) ion associated with D1 and D2, which is required for oxygen evolution. The PSII complex binds additional chlorophylls, carotenoids and specific lipids. as a cofactor. Post-translationally, tyr-157 forms a radical intermediate that is referred to as redox-active TyrZ, YZ or Y-Z.

Its subcellular location is the plastid. The protein localises to the chloroplast thylakoid membrane. The enzyme catalyses 2 a plastoquinone + 4 hnu + 2 H2O = 2 a plastoquinol + O2. Functionally, photosystem II (PSII) is a light-driven water:plastoquinone oxidoreductase that uses light energy to abstract electrons from H(2)O, generating O(2) and a proton gradient subsequently used for ATP formation. It consists of a core antenna complex that captures photons, and an electron transfer chain that converts photonic excitation into a charge separation. The D1/D2 (PsbA/PsbD) reaction center heterodimer binds P680, the primary electron donor of PSII as well as several subsequent electron acceptors. This chain is Photosystem II protein D1, found in Amphidinium operculatum (Dinoflagellate).